We begin with the raw amino-acid sequence, 99 residues long: Ferredoxin (99 aa).

Residues 4 to 96 form the 2Fe-2S ferredoxin-type domain; it reads YKIHLLCEEE…DCTISTHVEQ (93 aa). The [2Fe-2S] cluster site is built by C42, C47, C50, and C80.

Belongs to the 2Fe2S plant-type ferredoxin family. As to quaternary structure, forms a complex with heterodimeric ferredoxin-thioredoxin reductase (FTR) and thioredoxin. Requires [2Fe-2S] cluster as cofactor.

The protein resides in the plastid. It localises to the chloroplast. In terms of biological role, ferredoxins are iron-sulfur proteins that transfer electrons in a wide variety of metabolic reactions. This chain is Ferredoxin (petF), found in Pyropia yezoensis (Susabi-nori).